The chain runs to 451 residues: UDP-N-acetylmuramate--L-alanine ligase (451 aa).

110 to 116 contacts ATP; it reads GTHGKTT.

It belongs to the MurCDEF family.

The protein resides in the cytoplasm. The enzyme catalyses UDP-N-acetyl-alpha-D-muramate + L-alanine + ATP = UDP-N-acetyl-alpha-D-muramoyl-L-alanine + ADP + phosphate + H(+). It participates in cell wall biogenesis; peptidoglycan biosynthesis. In terms of biological role, cell wall formation. The polypeptide is UDP-N-acetylmuramate--L-alanine ligase (Francisella tularensis subsp. tularensis (strain SCHU S4 / Schu 4)).